Reading from the N-terminus, the 210-residue chain is Vacuolar protein sorting-associated protein 2 homolog 3 (210 aa).

The segment at 1–23 (MNIFTKKPNPREVLRESKREMTQ) is disordered. The segment covering 9–23 (NPREVLRESKREMTQ) has biased composition (basic and acidic residues). Residues 28 to 84 (IEKEIGSLQSEEKKLVLEIKRTAKSGNEGATKILARQLIRLRQQIANLQGSRAQMRG) are a coiled coil. Positions 178–200 (LSSAPKGKIGGKKAEDVGSSGID) are disordered.

Belongs to the SNF7 family. In terms of assembly, component of the endosomal sorting required for transport complex III (ESCRT-III), composed at least of VPS2, VPS20, VPS24 and VPS32.

Its subcellular location is the endosome. Functionally, component of the ESCRT-III complex, which is required for multivesicular bodies (MVBs) formation and sorting of endosomal cargo proteins into MVBs. The ESCRT-III complex is probably involved in the concentration of MVB cargo. The sequence is that of Vacuolar protein sorting-associated protein 2 homolog 3 (VPS2.3) from Arabidopsis thaliana (Mouse-ear cress).